A 299-amino-acid polypeptide reads, in one-letter code: tRNA uridine(34) hydroxylase (299 aa).

Positions 132–226 constitute a Rhodanese domain; that stretch reads AGRPVVMLDT…YFEEVGGAHY (95 aa). The active-site Cysteine persulfide intermediate is the C186.

The protein belongs to the TrhO family.

It catalyses the reaction uridine(34) in tRNA + AH2 + O2 = 5-hydroxyuridine(34) in tRNA + A + H2O. In terms of biological role, catalyzes oxygen-dependent 5-hydroxyuridine (ho5U) modification at position 34 in tRNAs. The sequence is that of tRNA uridine(34) hydroxylase from Burkholderia mallei (strain NCTC 10247).